The sequence spans 549 residues: MARDATKLEATVAKLKKHWADSAPHDMRAAFKSDPGRFERYSLSLDDLLFDWSKCRVNDETIGLLKELAIAADVEGRRAAMFAGEHINNTEDRAVLHVALRDTSSKEVLVDGHNVLPDVKEVLDRMAAFADGIRSGAIKGATGKKITDIVNIGIGGSDLGPVMATLALSPYHDGPRAHFVSNIDGAHIADTLGILDPATTLVIIASKTFTTIETMTNAQTARKWVADALGEAAVGAHFAAVSTALDRVAAFGIAEDRVFGFWDWVGGRYSVWSAIGLPVMIAIGPEDFRKFLAGAHSMDVHFRDAPLEKNLAVWLGLIGYWHRAICGYGSRAIIPYDQRLARLPAYLQQLDMESNGKSVTVDGKPVSGPTGPVVWGEPGTNGQHAFFQLLHQGTDTIPLEFIVAAKGHEKHLDHQHEMLLANCLAQSEALMKGRTLDEARAQLKAKNLPESEVERIAPHRVFSGNRPSLTLVHDKLDPFALGRLVALYEHRVFVEAQIFGINAFDQWGVELGKELATELLPVVSGEESSDGRDASTQGLVAHLHARRKA.

The active-site Proton donor is the Glu-353. Active-site residues include His-384 and Lys-513.

Belongs to the GPI family.

It localises to the cytoplasm. The catalysed reaction is alpha-D-glucose 6-phosphate = beta-D-fructose 6-phosphate. It participates in carbohydrate biosynthesis; gluconeogenesis. It functions in the pathway carbohydrate degradation; glycolysis; D-glyceraldehyde 3-phosphate and glycerone phosphate from D-glucose: step 2/4. Functionally, catalyzes the reversible isomerization of glucose-6-phosphate to fructose-6-phosphate. The polypeptide is Glucose-6-phosphate isomerase (Brucella anthropi (strain ATCC 49188 / DSM 6882 / CCUG 24695 / JCM 21032 / LMG 3331 / NBRC 15819 / NCTC 12168 / Alc 37) (Ochrobactrum anthropi)).